The sequence spans 297 residues: N-acetylmuramic acid 6-phosphate etherase (297 aa).

In terms of domain architecture, SIS spans alanine 56–lysine 219. Residue glutamate 84 is the Proton donor of the active site. The active site involves glutamate 115.

It belongs to the GCKR-like family. MurNAc-6-P etherase subfamily. Homodimer.

It carries out the reaction N-acetyl-D-muramate 6-phosphate + H2O = N-acetyl-D-glucosamine 6-phosphate + (R)-lactate. It participates in amino-sugar metabolism; N-acetylmuramate degradation. In terms of biological role, specifically catalyzes the cleavage of the D-lactyl ether substituent of MurNAc 6-phosphate, producing GlcNAc 6-phosphate and D-lactate. The polypeptide is N-acetylmuramic acid 6-phosphate etherase (Lactococcus lactis subsp. lactis (strain IL1403) (Streptococcus lactis)).